The following is a 430-amino-acid chain: Enolase (430 aa).

Residue glutamine 168 coordinates (2R)-2-phosphoglycerate. The active-site Proton donor is the glutamate 210. The Mg(2+) site is built by aspartate 247, glutamate 288, and aspartate 315. (2R)-2-phosphoglycerate is bound by residues lysine 340, arginine 369, serine 370, and lysine 391. The active-site Proton acceptor is the lysine 340.

Belongs to the enolase family. Requires Mg(2+) as cofactor.

It localises to the cytoplasm. It is found in the secreted. Its subcellular location is the cell surface. It carries out the reaction (2R)-2-phosphoglycerate = phosphoenolpyruvate + H2O. It participates in carbohydrate degradation; glycolysis; pyruvate from D-glyceraldehyde 3-phosphate: step 4/5. Functionally, catalyzes the reversible conversion of 2-phosphoglycerate (2-PG) into phosphoenolpyruvate (PEP). It is essential for the degradation of carbohydrates via glycolysis. The sequence is that of Enolase from Picosynechococcus sp. (strain ATCC 27264 / PCC 7002 / PR-6) (Agmenellum quadruplicatum).